A 144-amino-acid polypeptide reads, in one-letter code: Large ribosomal subunit protein uL13 (144 aa).

Belongs to the universal ribosomal protein uL13 family. Part of the 50S ribosomal subunit.

In terms of biological role, this protein is one of the early assembly proteins of the 50S ribosomal subunit, although it is not seen to bind rRNA by itself. It is important during the early stages of 50S assembly. This is Large ribosomal subunit protein uL13 from Nitrosospira multiformis (strain ATCC 25196 / NCIMB 11849 / C 71).